The primary structure comprises 360 residues: S-adenosylmethionine:tRNA ribosyltransferase-isomerase (360 aa).

The protein belongs to the QueA family. In terms of assembly, monomer.

It is found in the cytoplasm. The enzyme catalyses 7-aminomethyl-7-carbaguanosine(34) in tRNA + S-adenosyl-L-methionine = epoxyqueuosine(34) in tRNA + adenine + L-methionine + 2 H(+). Its pathway is tRNA modification; tRNA-queuosine biosynthesis. In terms of biological role, transfers and isomerizes the ribose moiety from AdoMet to the 7-aminomethyl group of 7-deazaguanine (preQ1-tRNA) to give epoxyqueuosine (oQ-tRNA). The protein is S-adenosylmethionine:tRNA ribosyltransferase-isomerase of Sinorhizobium medicae (strain WSM419) (Ensifer medicae).